Reading from the N-terminus, the 167-residue chain is MASAEPLTALSRWYLYAIHGYFCEVMFTAAWEFVVNLNWKFPGVTSVWALFIYGTSILIVERMYLRLRGRCPLLLRCLIYTLWTYLWEFTTGFILRQFNACPWDYSQFDFDFMGLITLEYAVPWFCGALIMEQFIIRNTLRLRFDKDAEPGEPSGALALANGHVKTD.

Residues 1–14 lie on the Cytoplasmic side of the membrane; sequence MASAEPLTALSRWY. The helical transmembrane segment at 15 to 35 threads the bilayer; sequence LYAIHGYFCEVMFTAAWEFVV. Residues 36 to 40 lie on the Extracellular side of the membrane; it reads NLNWK. The helical transmembrane segment at 41–61 threads the bilayer; that stretch reads FPGVTSVWALFIYGTSILIVE. At 62 to 73 the chain is on the cytoplasmic side; the sequence is RMYLRLRGRCPL. Residues 74–94 form a helical membrane-spanning segment; that stretch reads LLRCLIYTLWTYLWEFTTGFI. The Extracellular portion of the chain corresponds to 95 to 109; the sequence is LRQFNACPWDYSQFD. Residues 110 to 130 form a helical membrane-spanning segment; sequence FDFMGLITLEYAVPWFCGALI. Residues 131 to 167 are Cytoplasmic-facing; that stretch reads MEQFIIRNTLRLRFDKDAEPGEPSGALALANGHVKTD.

This sequence belongs to the TMEM229 family.

The protein localises to the membrane. This Homo sapiens (Human) protein is Transmembrane protein 229B (TMEM229B).